A 192-amino-acid polypeptide reads, in one-letter code: Phosphomevalonate kinase (192 aa).

Residues 17 to 23 (KRKSGKD) and Arg-141 contribute to the ATP site. Residue Asn-170 coordinates substrate. ATP contacts are provided by His-171, Arg-176, and Gln-180.

In terms of assembly, monomer. As to expression, heart, liver, skeletal muscle, kidney, and pancreas. Lower level in brain, placenta and lung.

Its subcellular location is the cytoplasm. The protein resides in the cytosol. It catalyses the reaction (R)-5-phosphomevalonate + ATP = (R)-5-diphosphomevalonate + ADP. Its pathway is isoprenoid biosynthesis; isopentenyl diphosphate biosynthesis via mevalonate pathway; isopentenyl diphosphate from (R)-mevalonate: step 2/3. In terms of biological role, catalyzes the reversible ATP-dependent phosphorylation of mevalonate 5-phosphate to produce mevalonate diphosphate and ADP, a key step in the mevalonic acid mediated biosynthesis of isopentenyl diphosphate and other polyisoprenoid metabolites. This is Phosphomevalonate kinase (PMVK) from Homo sapiens (Human).